The primary structure comprises 195 residues: Pyruvoyl-dependent arginine decarboxylase AaxB (195 aa).

A Pyruvic acid (Ser) modification is found at Ser-53.

The protein belongs to the pyruvoyl-dependent arginine decarboxylase family. Trimer of an alpha-beta dimer. Pyruvate serves as cofactor.

It is found in the cytoplasm. The catalysed reaction is L-arginine + H(+) = agmatine + CO2. Functionally, part of the AaxABC system, catalyzes the decarboxylation of L-arginine. The arginine uptake by the bacterium in the macrophage may be a virulence factor against the host innate immune response. This chain is Pyruvoyl-dependent arginine decarboxylase AaxB (aaxB), found in Chlamydia abortus (strain DSM 27085 / S26/3) (Chlamydophila abortus).